A 162-amino-acid chain; its full sequence is Regulatory protein RecX (162 aa).

This sequence belongs to the RecX family.

The protein localises to the cytoplasm. In terms of biological role, modulates RecA activity. The chain is Regulatory protein RecX from Xanthomonas campestris pv. campestris (strain 8004).